The sequence spans 295 residues: MNLEPINNALSHLRMLRSSVGQVFETLGNGVRAEHGEEGKEQKFLQELQELLNGVNSNLREFETCINDLTPPQAPFNLANTAYLSLETNLERQALYPHLVQSYKWHDKLHEYSTFASVLLQQNSLKRSYYTNTKRRRSLPSSHLATPQTVDNLIGSIHFPNMNLKIVRPFMTNAILHITIARVLRAAVILKGLLIEWVTVKGFDESLLDGVDEHWTVSRHQVFRKVQDHAHSAMLHFFSPTLPDLAIRSFITWFRSYLTLFADPCKKCGKHLHNTLPPTWRDLRTLEPYHEECKQ.

It belongs to the Mediator complex subunit 27 family. Component of the Mediator complex.

The protein localises to the nucleus. Functionally, component of the Mediator complex, a coactivator involved in the regulated transcription of nearly all RNA polymerase II-dependent genes. Mediator functions as a bridge to convey information from gene-specific regulatory proteins to the basal RNA polymerase II transcription machinery. Mediator is recruited to promoters by direct interactions with regulatory proteins and serves as a scaffold for the assembly of a functional preinitiation complex with RNA polymerase II and the general transcription factors. This is Mediator of RNA polymerase II transcription subunit 27 (MED27) from Aedes aegypti (Yellowfever mosquito).